A 206-amino-acid polypeptide reads, in one-letter code: FMN-dependent NADH:quinone oxidoreductase 2 (206 aa).

FMN contacts are provided by residues Ser10, 16 to 18, and 140 to 143; these read SYS and SCGG.

This sequence belongs to the azoreductase type 1 family. Homodimer. It depends on FMN as a cofactor.

It carries out the reaction 2 a quinone + NADH + H(+) = 2 a 1,4-benzosemiquinone + NAD(+). The enzyme catalyses N,N-dimethyl-1,4-phenylenediamine + anthranilate + 2 NAD(+) = 2-(4-dimethylaminophenyl)diazenylbenzoate + 2 NADH + 2 H(+). Functionally, quinone reductase that provides resistance to thiol-specific stress caused by electrophilic quinones. Its function is as follows. Also exhibits azoreductase activity. Catalyzes the reductive cleavage of the azo bond in aromatic azo compounds to the corresponding amines. The protein is FMN-dependent NADH:quinone oxidoreductase 2 of Cupriavidus pinatubonensis (strain JMP 134 / LMG 1197) (Cupriavidus necator (strain JMP 134)).